The chain runs to 316 residues: Pantothenate kinase (316 aa).

95-102 provides a ligand contact to ATP; that stretch reads GSVAVGKS.

This sequence belongs to the prokaryotic pantothenate kinase family.

The protein localises to the cytoplasm. It catalyses the reaction (R)-pantothenate + ATP = (R)-4'-phosphopantothenate + ADP + H(+). It functions in the pathway cofactor biosynthesis; coenzyme A biosynthesis; CoA from (R)-pantothenate: step 1/5. The chain is Pantothenate kinase from Shewanella sediminis (strain HAW-EB3).